Reading from the N-terminus, the 386-residue chain is Cytochrome b (386 aa).

A run of 4 helical transmembrane segments spans residues 32–52 (TGSL…FTAM), 76–98 (YLIR…GHIG), 113–133 (VWVI…TGYC), and 179–199 (FFAL…MHLM). H82 and H96 together coordinate heme b. Heme b is bound by residues H183 and H197. A ubiquinone is bound at residue H202. 4 helical membrane passes run 225–245 (FVFK…TFVF), 289–309 (LGGV…PVTD), 321–341 (FSKT…QLGQ), and 348–368 (FIEM…VLVP).

This sequence belongs to the cytochrome b family. Fungal cytochrome b-c1 complex contains 10 subunits; 3 respiratory subunits, 2 core proteins and 5 low-molecular weight proteins. Cytochrome b-c1 complex is a homodimer. It depends on heme b as a cofactor.

Its subcellular location is the mitochondrion inner membrane. Its function is as follows. Component of the ubiquinol-cytochrome c reductase complex (complex III or cytochrome b-c1 complex) that is part of the mitochondrial respiratory chain. The b-c1 complex mediates electron transfer from ubiquinol to cytochrome c. Contributes to the generation of a proton gradient across the mitochondrial membrane that is then used for ATP synthesis. The sequence is that of Cytochrome b (COB) from Wickerhamomyces pijperi (Yeast).